Here is a 189-residue protein sequence, read N- to C-terminus: Elongation factor P (189 aa).

The protein belongs to the elongation factor P family.

It is found in the cytoplasm. It functions in the pathway protein biosynthesis; polypeptide chain elongation. Functionally, involved in peptide bond synthesis. Stimulates efficient translation and peptide-bond synthesis on native or reconstituted 70S ribosomes in vitro. Probably functions indirectly by altering the affinity of the ribosome for aminoacyl-tRNA, thus increasing their reactivity as acceptors for peptidyl transferase. The chain is Elongation factor P from Campylobacter lari (strain RM2100 / D67 / ATCC BAA-1060).